A 120-amino-acid polypeptide reads, in one-letter code: Ribosome-binding factor A (120 aa).

Belongs to the RbfA family. As to quaternary structure, monomer. Binds 30S ribosomal subunits, but not 50S ribosomal subunits or 70S ribosomes.

The protein resides in the cytoplasm. In terms of biological role, one of several proteins that assist in the late maturation steps of the functional core of the 30S ribosomal subunit. Associates with free 30S ribosomal subunits (but not with 30S subunits that are part of 70S ribosomes or polysomes). Required for efficient processing of 16S rRNA. May interact with the 5'-terminal helix region of 16S rRNA. This is Ribosome-binding factor A from Rickettsia rickettsii (strain Iowa).